The sequence spans 400 residues: Formate-dependent phosphoribosylglycinamide formyltransferase (400 aa).

N(1)-(5-phospho-beta-D-ribosyl)glycinamide is bound by residues 22-23 and Glu82; that span reads EL. Residues Arg115, Lys156, 161–166, 196–199, and Glu204 each bind ATP; these read SSGKGQ and EGFI. The 190-residue stretch at 120–309 folds into the ATP-grasp domain; the sequence is RLAAETLGLP…EFALHARAIL (190 aa). Mg(2+) contacts are provided by Glu268 and Glu280. Residues Asp287, Lys361, and 368-369 each bind N(1)-(5-phospho-beta-D-ribosyl)glycinamide; that span reads RR.

It belongs to the PurK/PurT family. As to quaternary structure, homodimer.

It catalyses the reaction N(1)-(5-phospho-beta-D-ribosyl)glycinamide + formate + ATP = N(2)-formyl-N(1)-(5-phospho-beta-D-ribosyl)glycinamide + ADP + phosphate + H(+). Its pathway is purine metabolism; IMP biosynthesis via de novo pathway; N(2)-formyl-N(1)-(5-phospho-D-ribosyl)glycinamide from N(1)-(5-phospho-D-ribosyl)glycinamide (formate route): step 1/1. Involved in the de novo purine biosynthesis. Catalyzes the transfer of formate to 5-phospho-ribosyl-glycinamide (GAR), producing 5-phospho-ribosyl-N-formylglycinamide (FGAR). Formate is provided by PurU via hydrolysis of 10-formyl-tetrahydrofolate. This chain is Formate-dependent phosphoribosylglycinamide formyltransferase, found in Xanthomonas oryzae pv. oryzae (strain PXO99A).